Here is a 324-residue protein sequence, read N- to C-terminus: Putative transport protein TM_1187 (324 aa).

Helical transmembrane passes span Leu12–Ile32, Ile62–Ile82, Ile105–Leu125, Ile131–Ile151, Gly190–Phe210, Phe227–Val247, Gly252–Ala272, and Phe285–Ile305.

The protein belongs to the autoinducer-2 exporter (AI-2E) (TC 2.A.86) family.

The protein resides in the cell membrane. In Thermotoga maritima (strain ATCC 43589 / DSM 3109 / JCM 10099 / NBRC 100826 / MSB8), this protein is Putative transport protein TM_1187.